The sequence spans 157 residues: SsrA-binding protein (157 aa).

Belongs to the SmpB family.

Its subcellular location is the cytoplasm. Functionally, required for rescue of stalled ribosomes mediated by trans-translation. Binds to transfer-messenger RNA (tmRNA), required for stable association of tmRNA with ribosomes. tmRNA and SmpB together mimic tRNA shape, replacing the anticodon stem-loop with SmpB. tmRNA is encoded by the ssrA gene; the 2 termini fold to resemble tRNA(Ala) and it encodes a 'tag peptide', a short internal open reading frame. During trans-translation Ala-aminoacylated tmRNA acts like a tRNA, entering the A-site of stalled ribosomes, displacing the stalled mRNA. The ribosome then switches to translate the ORF on the tmRNA; the nascent peptide is terminated with the 'tag peptide' encoded by the tmRNA and targeted for degradation. The ribosome is freed to recommence translation, which seems to be the essential function of trans-translation. This is SsrA-binding protein from Levilactobacillus brevis (strain ATCC 367 / BCRC 12310 / CIP 105137 / JCM 1170 / LMG 11437 / NCIMB 947 / NCTC 947) (Lactobacillus brevis).